The chain runs to 294 residues: Putative deoxyribonuclease TATDN3 (294 aa).

H9, H11, E104, H144, H167, and D215 together coordinate Zn(2+).

This sequence belongs to the metallo-dependent hydrolases superfamily. TatD-type hydrolase family. Mn(2+) is required as a cofactor. It depends on Ca(2+) as a cofactor. Mg(2+) serves as cofactor. Requires Zn(2+) as cofactor.

It localises to the nucleus. With respect to regulation, the 3'-exonuclease activity is sensitive to the metal ion present in the active site, whereas the AP endodeoxyribonuclease activity is observed in a variety of divalent metal cofactors. 3'-exoxonuclease activity is suppressed in the presence of Ca(2+), Zn(2+) and Ni(2+). In terms of biological role, exhibits 3'-exonuclease activities and apurinic/apyrimidinic (AP) endonuclease (in vitro). Show preferential AP endonuclease activity on double-stranded DNA substrates and 3'- exonuclease activity on single-stranded DNA. This Mus musculus (Mouse) protein is Putative deoxyribonuclease TATDN3 (Tatdn3).